The chain runs to 90 residues: MNVVPSRPEVSRGSPKSPLREHVAQVVRRYLRDLDGCDVNDLYNMVLHEMEIPLLVEVLNHCEGNQSRAAALLGIHRATLRKKLKEYGLV.

The H-T-H motif DNA-binding region spans 66 to 85 (QSRAAALLGIHRATLRKKLK).

Belongs to the transcriptional regulatory Fis family.

The chain is Putative Fis-like DNA-binding protein from Xylella fastidiosa (strain 9a5c).